The following is a 76-amino-acid chain: Kappa-actitoxin-Avd4o (76 aa).

Residues 1-19 (MNKALFLSLVVLCAAVVFA) form the signal peptide. Residues 20-33 (AEDLQKAKHAPFKL) constitute a propeptide that is removed on maturation. 3 disulfides stabilise this stretch: Cys37–Cys72, Cys39–Cys65, and Cys55–Cys73.

The protein belongs to the sea anemone type 3 (BDS) potassium channel toxin family. In terms of tissue distribution, experimental results show no expression in the ectodermal tissue from the distal and proximal tentacles, body wall, and oral disk. Since paralogs are expressed in this tissue, an expression of this toxin in this tissue is probable. The negative results could be explained by the very low abundance of EST sequences.

Its subcellular location is the secreted. It localises to the nematocyst. Functionally, blocks Kv3 voltage-gated potassium channels. Reduces blood pressure. This is Kappa-actitoxin-Avd4o from Anemonia viridis (Snakelocks anemone).